Consider the following 174-residue polypeptide: Protein GrpE (174 aa).

A disordered region spans residues 1–35 (MAQDIKNEEVEEVQEEEVVKTAEETTPEKSELDLA). Over residues 17 to 35 (EVVKTAEETTPEKSELDLA) the composition is skewed to basic and acidic residues.

It belongs to the GrpE family. Homodimer.

Its subcellular location is the cytoplasm. Its function is as follows. Participates actively in the response to hyperosmotic and heat shock by preventing the aggregation of stress-denatured proteins, in association with DnaK and GrpE. It is the nucleotide exchange factor for DnaK and may function as a thermosensor. Unfolded proteins bind initially to DnaJ; upon interaction with the DnaJ-bound protein, DnaK hydrolyzes its bound ATP, resulting in the formation of a stable complex. GrpE releases ADP from DnaK; ATP binding to DnaK triggers the release of the substrate protein, thus completing the reaction cycle. Several rounds of ATP-dependent interactions between DnaJ, DnaK and GrpE are required for fully efficient folding. The polypeptide is Protein GrpE (Streptococcus pneumoniae serotype 4 (strain ATCC BAA-334 / TIGR4)).